A 121-amino-acid chain; its full sequence is Alpha-endosulfine (121 aa).

The segment at 1–53 (MSQKQEEENPAEETGEEKQDTQEKEGILPERAEEAKLKAKYPSLGQKPGGSDF) is disordered. Serine 2 bears the N-acetylserine mark. Position 2 is a phosphoserine (serine 2). A compositionally biased stretch (basic and acidic residues) spans 16-37 (EEKQDTQEKEGILPERAEEAKL). Residue threonine 21 is modified to Phosphothreonine. A Phosphoserine modification is found at serine 43. Serine 67 is subject to Phosphoserine; by GWL. The interval 79–121 (NKQLPSAGPDKNLVTGDHIPTPQDLPQRKSSLVTSKLAGGQVE) is disordered. Serine 109 bears the Phosphoserine; by PKA mark.

Belongs to the endosulfine family. As to quaternary structure, interacts (when phosphorylated at Ser-67) with PPP2R2D. Interacts with ABCC8. Interacts with SNCA; interaction is disrupted when phosphorylated at Ser-109. Phosphorylation at Ser-67 by GWL during mitosis is essential for interaction with PPP2R2D (PR55-delta) and subsequent inactivation of PP2A. Phosphorylated by PKA. In terms of tissue distribution, widely expressed with high levels in skeletal muscle and brain and lower levels in the pancreas.

The protein localises to the cytoplasm. Functionally, protein phosphatase inhibitor that specifically inhibits protein phosphatase 2A (PP2A) during mitosis. When phosphorylated at Ser-67 during mitosis, specifically interacts with PPP2R2D (PR55-delta) and inhibits its activity, leading to inactivation of PP2A, an essential condition to keep cyclin-B1-CDK1 activity high during M phase. Also acts as a stimulator of insulin secretion by interacting with sulfonylurea receptor (ABCC8), thereby preventing sulfonylurea from binding to its receptor and reducing K(ATP) channel currents. In Homo sapiens (Human), this protein is Alpha-endosulfine (ENSA).